The following is a 226-amino-acid chain: Endonuclease NucS (226 aa).

It belongs to the NucS endonuclease family.

It localises to the cytoplasm. Its function is as follows. Cleaves both 3' and 5' ssDNA extremities of branched DNA structures. This chain is Endonuclease NucS, found in Mycobacterium tuberculosis (strain ATCC 25618 / H37Rv).